The chain runs to 319 residues: D-galacturonate reductase (319 aa).

Tyr-58 functions as the Proton donor in the catalytic mechanism. His-121 contributes to the substrate binding site. 216–275 (SPLGAARTKWGDDRVLGSDIIEEIAQAKGKSTAQISLRWVYEQGVSIVTKSYNKERMRQN) serves as a coordination point for NADP(+).

The protein belongs to the aldo/keto reductase family. In terms of tissue distribution, expressed specifically in the receptacle tissue of the fruit.

The enzyme catalyses L-galactonate + NADP(+) = aldehydo-D-galacturonate + NADPH + H(+). It functions in the pathway cofactor biosynthesis; L-ascorbate biosynthesis. Involved in ascorbic acid (vitamin C) biosynthesis. The sequence is that of D-galacturonate reductase (GALUR) from Fragaria ananassa (Strawberry).